The sequence spans 407 residues: Obg-like ATPase homolog (407 aa).

An OBG-type G domain is found at 46-301; that stretch reads LKIGIVGMPN…LTPEEAAQEC (256 aa). Residues 55-60 and Met-249 contribute to the ATP site; that span reads NIGKST. The TGS domain occupies 322-405; it reads NLIHYFTASE…EPGDIIFWKI (84 aa).

This sequence belongs to the TRAFAC class OBG-HflX-like GTPase superfamily. OBG GTPase family.

Its function is as follows. Hydrolyzes ATP, and can also hydrolyze GTP with lower efficiency. Has lower affinity for GTP. The sequence is that of Obg-like ATPase homolog from Schizosaccharomyces pombe (strain 972 / ATCC 24843) (Fission yeast).